Here is a 276-residue protein sequence, read N- to C-terminus: Phosducin-like protein 1 (276 aa).

A phosphoserine mark is found at Ser-18, Ser-19, Ser-20, and Ser-42. Positions 18 to 74 (SSSEGEDNGDEGGDNKGASGKSRCSGLTIDTNPDATPAGGFRQQSSTNTGPKGVVKD) are disordered. The Phosducin domain occupies 62–272 (SSTNTGPKGV…LIEHGIIVDR (211 aa)). Residues 153–276 (FGQVQQLTSH…GIIVDRALYN (124 aa)) are thioredoxin fold.

Belongs to the phosducin family. As to quaternary structure, forms a complex with the beta and gamma subunits of the GTP-binding proteins. Interacts with the CCT chaperonin complex.

In terms of biological role, functions as a co-chaperone for CCT in the assembly of heterotrimeric G protein complexes, facilitates the assembly of both Gbeta-Ggamma and RGS-Gbeta5 heterodimers. The sequence is that of Phosducin-like protein 1 from Drosophila melanogaster (Fruit fly).